The sequence spans 217 residues: ITG-like peptide (217 aa).

Positions 1 to 21 (MHRTMAVTAVLVLSAAGAAHA) are cleaved as a signal peptide. Positions 22 to 208 (WGGLFNRFSS…REFVQHTAGE (187 aa)) are excised as a propeptide.

As to expression, ITG-like peptide: Expressed in corpora cardiaca (CC), corpora allata (CA), antennal lobe (AL) and gnathal ganglion (GNG) (at protein level). Expression in AL detected in all animals, expression in GNG detected in most animals and in CA and CC detected in few animals (at protein level).

Its subcellular location is the secreted. This is ITG-like peptide from Agrotis ipsilon (Black cutworm moth).